Reading from the N-terminus, the 106-residue chain is uncharacterized protein (106 aa).

The disordered stretch occupies residues 54–106 (RSTLVATSPRRRSLVQQRRPPLREQNGGSGSSCVSSGGSASTVKTPGSRRASK). The segment covering 84 to 94 (SSCVSSGGSAS) has biased composition (low complexity).

This is an uncharacterized protein from Human adenovirus C serotype 2 (HAdV-2).